A 140-amino-acid chain; its full sequence is MTIQYTFSMIKPDVIKRNKIGQVNTYLENAGLKIVAQKMKFLTKYEAECFYDEHRARSFFNSLVEYITSGAVVLQVLKGEDAITLNRTIMGATNPAEAKEGTIRKDLGESIEANSIHGSDSENSAKREIKFFFSKSEIIE.

ATP-binding residues include K11, F59, R87, T93, R104, and N114. Catalysis depends on H117, which acts as the Pros-phosphohistidine intermediate.

This sequence belongs to the NDK family. Homotetramer. The cofactor is Mg(2+).

Its subcellular location is the cytoplasm. The catalysed reaction is a 2'-deoxyribonucleoside 5'-diphosphate + ATP = a 2'-deoxyribonucleoside 5'-triphosphate + ADP. It catalyses the reaction a ribonucleoside 5'-diphosphate + ATP = a ribonucleoside 5'-triphosphate + ADP. Its function is as follows. Major role in the synthesis of nucleoside triphosphates other than ATP. The ATP gamma phosphate is transferred to the NDP beta phosphate via a ping-pong mechanism, using a phosphorylated active-site intermediate. The protein is Nucleoside diphosphate kinase of Rickettsia prowazekii (strain Madrid E).